The following is a 420-amino-acid chain: Probable pectate lyase C (420 aa).

The first 20 residues, 1–20 (MKLSAPLLVSLAAFSQAVTA), serve as a signal peptide directing secretion. N-linked (GlcNAc...) asparagine glycosylation is found at Asn-49, Asn-165, and Asn-202. Arg-205 is a catalytic residue. The EF-hand domain occupies 262-297 (NANFHGYVQNNYYDPDKDGQLDGFELGVSSSNYGGV). Ca(2+)-binding residues include Asp-275, Asp-277, Asp-279, Gln-281, and Glu-286. The disordered stretch occupies residues 358–396 (TMGGPGTLNGGTPAKDTDGDGIPDEAEKQLGTDPNTNDS). Residue Asn-394 is glycosylated (N-linked (GlcNAc...) asparagine).

It belongs to the polysaccharide lyase 1 family. Ca(2+) serves as cofactor.

It localises to the secreted. The enzyme catalyses Eliminative cleavage of (1-&gt;4)-alpha-D-galacturonan to give oligosaccharides with 4-deoxy-alpha-D-galact-4-enuronosyl groups at their non-reducing ends.. Functionally, pectinolytic enzyme consist of four classes of enzymes: pectin lyase, polygalacturonase, pectin methylesterase and rhamnogalacturonase. Among pectinolytic enzymes, pectin lyase is the most important in depolymerization of pectin, since it cleaves internal glycosidic bonds of highly methylated pectins. Favors pectate, the anion, over pectin, the methyl ester. This Aspergillus fumigatus (strain CBS 144.89 / FGSC A1163 / CEA10) (Neosartorya fumigata) protein is Probable pectate lyase C (plyC).